Consider the following 1256-residue polypeptide: MAKKFNYKLPSMVALTLVGSAVTAHQVQAAETTQDQTTNKNVLDSNKVKATTEQAKAEVKNPTQNISGTQVYQDPAIVQPKTANNKTGNAQVSQKVDTAQVNGDTRANQSATTNNTQPVAKSTSTTAPKTNTNVTNAGYSLVDDEDDNSENQINPELIKSAAKPAALETQYKTAAPKAATTSAPKAKTEATPKVTTFSASAQPRSVAATPKTSLPKYKPQVNSSINDYIRKNNLKAPKIEEDYTSYFPKYAYRNGVGRPEGIVVHDTANDRSTINGEISYMKNNYQNAFVHAFVDGDRIIETAPTDYLSWGVGAVGNPRFINVEIVHTHDYASFARSMNNYADYAATQLQYYGLKPDSAEYDGNGTVWTHYAVSKYLGGTDHADPHGYLRSHNYSYDQLYDLINEKYLIKMGKVAPWGTQSTTTPTTPSKPTTPSKPSTGKLTVAANNGVAQIKPTNSGLYTTVYDKTGKATNEVQKTFAVSKTATLGNQKFYLVQDYNSGNKFGWVKEGDVVYNTAKSPVNVNQSYSIKPGTKLYTVPWGTSKQVAGSVSGSGNQTFKASKQQQIDKSIYLYGSVNGKSGWVSKAYLVDTAKPTPTPTPKPSTPTTNNKLTVSSLNGVAQINAKNNGLFTTVYDKTGKPTKEVQKTFAVTKEASLGGNKFYLVKDYNSPTLIGWVKQGDVIYNNAKSPVNVMQTYTVKPGTKLYSVPWGTYKQEAGAVSGTGNQTFKATKQQQIDKSIYLFGTVNGKSGWVSKAYLAVPAAPKKAVAQPKTAVKAYTVTKPQTTQTVSKIAQVKPNNTGIRASVYEKTAKNGAKYADRTFYVTKERAHGNETYVLLNNTSHNIPLGWFNVKDLNVQNLGKEVKTTQKYTVNKSNNGLSMVPWGTKNQVILTGNNIAQGTFNATKQVSVGKDVYLYGTINNRTGWVNAKDLTAPTAVKPTTSAAKDYNYTYVIKNGNGYYYVTPNSDTAKYSLKAFNEQPFAVVKEQVINGQTWYYGKLSNGKLAWIKSTDLAKELIKYNQTGMALNQVAQIQAGLQYKPQVQRVPGKWTGANFNDVKHAMDTKRLAQDPALKYQFLRLDQPQNISIDKINQFLKGKGVLENQGAAFNKAAQMYGINEVYLISHALLETGNGTSQLAKGADVVNNKVVTNSNTKYHNVFGIAAYDNDPLREGIKYAKQAGWDTVSKAIVGGAKFIGNSYVKAGQNTLYKMRWNPAHPGTHQYATDVDWANINAKIIKGYYDKIGEVGKYFDIPQYK.

The N-terminal stretch at 1-29 is a signal peptide; sequence MAKKFNYKLPSMVALTLVGSAVTAHQVQA. The span at 103–138 shows a compositional bias: polar residues; it reads GDTRANQSATTNNTQPVAKSTSTTAPKTNTNVTNAG. Disordered stretches follow at residues 103 to 151, 172 to 219, and 419 to 440; these read GDTR…NSEN, KTAA…KYKP, and TQST…PSTG. 2 stretches are compositionally biased toward low complexity: residues 172-196 and 421-439; these read KTAA…KVTT and STTT…KPST. An N-acetylmuramoyl-L-alanine amidase region spans residues 199–775; that stretch reads ASAQPRSVAA…AVAQPKTAVK (577 aa). GW domains lie at 443–517, 519–593, 612–686, 688–762, 784–859, 861–936, and 943–1017; these read TVAA…YNTA, SPVN…DTAK, TVSS…YNNA, SPVN…VPAA, TTQT…VQNL, KEVK…APTA, and AAKD…KELI. Positions 776–1256 are endo-beta-N-acetylglucosaminidase; sequence AYTVTKPQTT…GKYFDIPQYK (481 aa).

It in the N-terminal section; belongs to the N-acetylmuramoyl-L-alanine amidase 2 family. The protein in the C-terminal section; belongs to the glycosyl hydrolase 73 family. Oligomer; forms a ring structure at the cell surface which is important for efficient partitioning of daughter cells after cell division. Post-translationally, undergoes proteolytic processing to generate the two extracellular lytic enzymes, probably at the septal region on the cell surface.

It is found in the secreted. It catalyses the reaction Hydrolyzes the link between N-acetylmuramoyl residues and L-amino acid residues in certain cell-wall glycopeptides.. It carries out the reaction an N(4)-(oligosaccharide-(1-&gt;3)-[oligosaccharide-(1-&gt;6)]-beta-D-Man-(1-&gt;4)-beta-D-GlcNAc-(1-&gt;4)-alpha-D-GlcNAc)-L-asparaginyl-[protein] + H2O = an oligosaccharide-(1-&gt;3)-[oligosaccharide-(1-&gt;6)]-beta-D-Man-(1-&gt;4)-D-GlcNAc + N(4)-(N-acetyl-beta-D-glucosaminyl)-L-asparaginyl-[protein]. Its function is as follows. Endohydrolysis of the di-N-acetylchitobiosyl unit in high-mannose glycopeptides and glycoproteins containing the -[(Man)5(GlcNAc)2]-Asn structure. One N-acetyl-D-glucosamine residue remains attached to the protein; the rest of the oligosaccharide is released intact. Cleaves the peptidoglycan connecting the daughter cells at the end of the cell division cycle, resulting in the separation of the two newly divided cells. Acts as an autolysin in penicillin-induced lysis. The protein is Bifunctional autolysin (atl) of Staphylococcus aureus (strain COL).